The chain runs to 250 residues: Tetrahydromethanopterin S-methyltransferase subunit D (250 aa).

The next 6 helical transmembrane spans lie at 9–29 (IIWM…VHFV), 47–67 (GTVQ…GFMM), 86–106 (IMIA…VGVV), 144–164 (IIGG…LIEV), 184–204 (LVAV…VIPS), and 230–250 (LVAS…LGGI).

It belongs to the MtrD family. In terms of assembly, the complex is composed of 8 subunits; MtrA, MtrB, MtrC, MtrD, MtrE, MtrF, MtrG and MtrH.

Its subcellular location is the cell membrane. It carries out the reaction 5-methyl-5,6,7,8-tetrahydromethanopterin + coenzyme M + 2 Na(+)(in) = 5,6,7,8-tetrahydromethanopterin + methyl-coenzyme M + 2 Na(+)(out). It functions in the pathway one-carbon metabolism; methanogenesis from CO(2); methyl-coenzyme M from 5,10-methylene-5,6,7,8-tetrahydromethanopterin: step 2/2. Its function is as follows. Part of a complex that catalyzes the formation of methyl-coenzyme M and tetrahydromethanopterin from coenzyme M and methyl-tetrahydromethanopterin. This is an energy-conserving, sodium-ion translocating step. This Methanosarcina barkeri (strain Fusaro / DSM 804) protein is Tetrahydromethanopterin S-methyltransferase subunit D.